The primary structure comprises 146 residues: Hemoglobin subunit beta (146 aa).

Valine 1 carries the post-translational modification N-acetylvaline. Residues 2 to 146 (HLTAEEKSAV…VANALAHKYH (145 aa)) enclose the Globin domain. Threonine 12 is subject to Phosphothreonine. At serine 44 the chain carries Phosphoserine. An N6-acetyllysine modification is found at lysine 59. Histidine 63 serves as a coordination point for heme b. Position 82 is an N6-acetyllysine (lysine 82). Histidine 92 lines the heme b pocket. Residue cysteine 93 is modified to S-nitrosocysteine. Lysine 144 bears the N6-acetyllysine mark.

Belongs to the globin family. As to quaternary structure, heterotetramer of two alpha chains and two beta chains. As to expression, red blood cells.

In terms of biological role, involved in oxygen transport from the lung to the various peripheral tissues. The chain is Hemoglobin subunit beta (HBB) from Meles meles (Eurasian badger).